Reading from the N-terminus, the 975-residue chain is Glycine dehydrogenase (decarboxylating) (975 aa).

K723 is modified (N6-(pyridoxal phosphate)lysine).

It belongs to the GcvP family. As to quaternary structure, the glycine cleavage system is composed of four proteins: P, T, L and H. Requires pyridoxal 5'-phosphate as cofactor.

The enzyme catalyses N(6)-[(R)-lipoyl]-L-lysyl-[glycine-cleavage complex H protein] + glycine + H(+) = N(6)-[(R)-S(8)-aminomethyldihydrolipoyl]-L-lysyl-[glycine-cleavage complex H protein] + CO2. In terms of biological role, the glycine cleavage system catalyzes the degradation of glycine. The P protein binds the alpha-amino group of glycine through its pyridoxal phosphate cofactor; CO(2) is released and the remaining methylamine moiety is then transferred to the lipoamide cofactor of the H protein. The polypeptide is Glycine dehydrogenase (decarboxylating) (Burkholderia vietnamiensis (strain G4 / LMG 22486) (Burkholderia cepacia (strain R1808))).